Reading from the N-terminus, the 556-residue chain is Probable Xaa-Pro aminopeptidase SS1G_06948 (556 aa).

Residues D305, D316, E460, and E501 each coordinate Mn(2+).

The protein belongs to the peptidase M24B family. Mn(2+) is required as a cofactor.

The catalysed reaction is Release of any N-terminal amino acid, including proline, that is linked to proline, even from a dipeptide or tripeptide.. Its function is as follows. Catalyzes the removal of a penultimate prolyl residue from the N-termini of peptides. The chain is Probable Xaa-Pro aminopeptidase SS1G_06948 from Sclerotinia sclerotiorum (strain ATCC 18683 / 1980 / Ss-1) (White mold).